Here is a 390-residue protein sequence, read N- to C-terminus: Phosphopentomutase (390 aa).

Mn(2+)-binding residues include aspartate 10, aspartate 282, histidine 287, aspartate 323, histidine 324, and histidine 335.

The protein belongs to the phosphopentomutase family. It depends on Mn(2+) as a cofactor.

Its subcellular location is the cytoplasm. The enzyme catalyses 2-deoxy-alpha-D-ribose 1-phosphate = 2-deoxy-D-ribose 5-phosphate. The catalysed reaction is alpha-D-ribose 1-phosphate = D-ribose 5-phosphate. The protein operates within carbohydrate degradation; 2-deoxy-D-ribose 1-phosphate degradation; D-glyceraldehyde 3-phosphate and acetaldehyde from 2-deoxy-alpha-D-ribose 1-phosphate: step 1/2. Functionally, isomerase that catalyzes the conversion of deoxy-ribose 1-phosphate (dRib-1-P) and ribose 1-phosphate (Rib-1-P) to deoxy-ribose 5-phosphate (dRib-5-P) and ribose 5-phosphate (Rib-5-P), respectively. The chain is Phosphopentomutase from Lachnoclostridium phytofermentans (strain ATCC 700394 / DSM 18823 / ISDg) (Clostridium phytofermentans).